The chain runs to 468 residues: Meiotically up-regulated gene 111 protein (468 aa).

The next 12 membrane-spanning stretches (helical) occupy residues 13 to 33 (LVLI…NSVT), 59 to 79 (IVSA…VPFY), 92 to 112 (VFTT…SILY), 116 to 136 (FPTC…ISGT), 158 to 178 (IVVL…LGSI), 190 to 210 (LISW…AVFF), 285 to 305 (PIPI…FFDI), 330 to 350 (FGSL…GFSV), 356 to 376 (TMLI…FATA), 382 to 402 (LALF…LVAA), 417 to 437 (ALLE…AFIV), and 446 to 466 (FFIG…LLLG).

It is found in the membrane. Has a role in meiosis. This chain is Meiotically up-regulated gene 111 protein (mug111), found in Schizosaccharomyces pombe (strain 972 / ATCC 24843) (Fission yeast).